Here is a 766-residue protein sequence, read N- to C-terminus: Subtilisin-like protease SBT3.13 (766 aa).

An N-terminal signal peptide occupies residues 1–21 (MNNSLQSSKLVLLLAIALVLF). Residues 22–120 (LNTELDFLTA…VIPNRIRKLK (99 aa)) constitute a propeptide, activation peptide. The Inhibitor I9 domain maps to 41–119 (VYIVYLGERE…HVIPNRIRKL (79 aa)). Positions 134 to 618 (PTSFSSLSSV…GGLVNPEKAA (485 aa)) constitute a Peptidase S8 domain. Asp-162 functions as the Charge relay system in the catalytic mechanism. N-linked (GlcNAc...) asparagine glycans are attached at residues Asn-195 and Asn-223. His-239 serves as the catalytic Charge relay system. 2 N-linked (GlcNAc...) asparagine glycosylation sites follow: Asn-254 and Asn-389. Ser-549 acts as the Charge relay system in catalysis. N-linked (GlcNAc...) asparagine glycosylation occurs at Asn-641.

This sequence belongs to the peptidase S8 family.

Its subcellular location is the secreted. The protein is Subtilisin-like protease SBT3.13 of Arabidopsis thaliana (Mouse-ear cress).